The chain runs to 351 residues: Protein-glutamate methylesterase/protein-glutamine glutaminase 2 (351 aa).

In terms of domain architecture, Response regulatory spans 4–121 (KVLVVDDSTL…PQGFNEYQDL (118 aa)). 4-aspartylphosphate is present on aspartate 55. In terms of domain architecture, CheB-type methylesterase spans 156–348 (RTVNTQLVAI…DKLLQYLASV (193 aa)). Residues serine 168, histidine 194, and aspartate 290 contribute to the active site.

The protein belongs to the CheB family. Post-translationally, phosphorylated by CheA. Phosphorylation of the N-terminal regulatory domain activates the methylesterase activity.

The protein resides in the cytoplasm. The catalysed reaction is [protein]-L-glutamate 5-O-methyl ester + H2O = L-glutamyl-[protein] + methanol + H(+). It carries out the reaction L-glutaminyl-[protein] + H2O = L-glutamyl-[protein] + NH4(+). Involved in chemotaxis. Part of a chemotaxis signal transduction system that modulates chemotaxis in response to various stimuli. Catalyzes the demethylation of specific methylglutamate residues introduced into the chemoreceptors (methyl-accepting chemotaxis proteins or MCP) by CheR. Also mediates the irreversible deamidation of specific glutamine residues to glutamic acid. In Shewanella oneidensis (strain ATCC 700550 / JCM 31522 / CIP 106686 / LMG 19005 / NCIMB 14063 / MR-1), this protein is Protein-glutamate methylesterase/protein-glutamine glutaminase 2.